Consider the following 1235-residue polypeptide: ATP-dependent helicase/nuclease subunit A (1235 aa).

The UvrD-like helicase ATP-binding domain maps to 12–482 (TLWTDDQWKA…IDLSQNFRSR (471 aa)). 33-40 (AAAGSGKT) contacts ATP. One can recognise a UvrD-like helicase C-terminal domain in the interval 509–800 (AAELTLGANF…RMMTIHASKG (292 aa)).

This sequence belongs to the helicase family. AddA subfamily. As to quaternary structure, heterodimer of AddA and AddB/RexB. Requires Mg(2+) as cofactor.

It carries out the reaction Couples ATP hydrolysis with the unwinding of duplex DNA by translocating in the 3'-5' direction.. The catalysed reaction is ATP + H2O = ADP + phosphate + H(+). The heterodimer acts as both an ATP-dependent DNA helicase and an ATP-dependent, dual-direction single-stranded exonuclease. Recognizes the chi site generating a DNA molecule suitable for the initiation of homologous recombination. The AddA nuclease domain is required for chi fragment generation; this subunit has the helicase and 3' -&gt; 5' nuclease activities. The sequence is that of ATP-dependent helicase/nuclease subunit A from Listeria welshimeri serovar 6b (strain ATCC 35897 / DSM 20650 / CCUG 15529 / CIP 8149 / NCTC 11857 / SLCC 5334 / V8).